Reading from the N-terminus, the 305-residue chain is Guanine nucleotide-binding protein subunit beta (305 aa).

7 WD repeats span residues 19 to 49, 61 to 91, 104 to 133, 145 to 176, 188 to 218, 231 to 260, and 272 to 302; these read NKLG…LVWD, APSV…VVYD, GHAG…MFWD, GHEM…KLWD, GNTS…RCFD, PSSS…EVWD, and GHEN…RLWS.

It belongs to the WD repeat G protein beta family. As to quaternary structure, g proteins are composed of 3 units, alpha, beta and gamma. Binding of the beta-gamma subunit complex (git5-git11) to the alpha subunit (gpa2) facilitates interaction with GPCR git3.

Its subcellular location is the cell membrane. The protein localises to the cytoplasm. It is found in the nucleus. Its function is as follows. Beta subunit of the heterotrimeric guanine nucleotide-binding protein (G protein) involved in glucose-induced cAMP signaling. The beta-gamma subunits (git5-git11) promote binding of the alpha subunit gpa2 to GPCR git3, which senses extracellular glucose, to activate cAMP-PKA signaling and repress sexual development and gluconeogenesis. This chain is Guanine nucleotide-binding protein subunit beta (git5), found in Schizosaccharomyces pombe (strain 972 / ATCC 24843) (Fission yeast).